Consider the following 1728-residue polypeptide: Protein NETWORKED 1A (1728 aa).

The NAB domain occupies 13 to 92 (YSWWWDSHIP…ERYDHATVEL (80 aa)). 7 coiled-coil regions span residues 155 to 446 (LGNS…LEIE), 476 to 827 (MLRD…QVEI), 857 to 885 (FSEKLIAELESENLEQQMEAEFLVHEIDN), 954 to 1016 (QFQS…AELQ), 1090 to 1323 (EQAE…KETV), 1403 to 1431 (LLQDMKTRIKTIKQAVAEEKKRRGKLRRR), and 1576 to 1684 (RRLA…TKSK). Positions 1419 to 1441 (AEEKKRRGKLRRRSSSHRSKDRK) are disordered. Positions 1424–1439 (RRGKLRRRSSSHRSKD) are enriched in basic residues.

It belongs to the NET family. In terms of assembly, interacts with F-actin. Expressed in root meristems and at very low levels throughout mature vasculature.

The protein localises to the cytoplasm. It localises to the cytoskeleton. Its subcellular location is the cell membrane. The protein resides in the cell junction. It is found in the plasmodesma. Functionally, plant-specific actin binding protein. Associates with F-actin at the plasma membrane and plasmodesmata. May be part of a membrane-cytoskeletal adapter complex. The protein is Protein NETWORKED 1A of Arabidopsis thaliana (Mouse-ear cress).